Here is a 632-residue protein sequence, read N- to C-terminus: Armadillo repeat-containing X-linked protein 2 (632 aa).

The Mitochondrial intermembrane portion of the chain corresponds to 1–6; it reads MSRVRD. Positions 1–6 are mitochondrion outer membrane (MOM)-targeting sequence; it reads MSRVRD. A helical; Signal-anchor membrane pass occupies residues 7-25; the sequence is AGCVAAGIVIGAGAWYCVY. The interval 26-40 is mitochondrion outer membrane (MOM)-targeting sequence; it reads KYTRGRDQTKKRMAK. Residues 26–632 are Cytoplasmic-facing; sequence KYTRGRDQTK…VKVIKLVNKF (607 aa). Disordered stretches follow at residues 68–124, 160–304, and 335–369; these read GFSP…AGVG, APKV…KVEV, and VPDSEEGESGWTDTESDSDSEPETQRRGRGRRPVA. Composition is skewed to low complexity over residues 86-120 and 211-241; these read EASALDTVGAEAVAPAASSAEAQSGAGSQAQEADG and VASPTEAAEAPVPATPTGAAAPTGAAESPGT. A compositionally biased stretch (acidic residues) spans 336–356; sequence PDSEEGESGWTDTESDSDSEP. 3 ARM repeats span residues 376-416, 418-457, and 498-537; these read PYEI…NNAN, SCNQETIRKLGGLPIIANMINKTDPHIKEKALMAMNNLSE, and ITNDYQHLLVNSIANFFRLLSQGGGKIKVEILKILSNFAE.

Belongs to the eutherian X-chromosome-specific Armcx family. In terms of tissue distribution, expressed at high levels ovary, heart, testis, prostate, brain, spleen and colon. Expressed at very low levels in liver and thymus. Not expressed in peripheral blood leukocytes. Not expressed in pancreas and ovarian carcinomas.

It is found in the mitochondrion. Its subcellular location is the mitochondrion outer membrane. May regulate the dynamics and distribution of mitochondria in neural cells. The sequence is that of Armadillo repeat-containing X-linked protein 2 (ARMCX2) from Homo sapiens (Human).